We begin with the raw amino-acid sequence, 418 residues long: Serine hydroxymethyltransferase (418 aa).

Residues Leu120 and 124–126 contribute to the (6S)-5,6,7,8-tetrahydrofolate site; that span reads GHL. Lys229 is subject to N6-(pyridoxal phosphate)lysine. Residue 353 to 355 participates in (6S)-5,6,7,8-tetrahydrofolate binding; that stretch reads SPF.

It belongs to the SHMT family. In terms of assembly, homodimer. It depends on pyridoxal 5'-phosphate as a cofactor.

The protein resides in the cytoplasm. The enzyme catalyses (6R)-5,10-methylene-5,6,7,8-tetrahydrofolate + glycine + H2O = (6S)-5,6,7,8-tetrahydrofolate + L-serine. Its pathway is one-carbon metabolism; tetrahydrofolate interconversion. The protein operates within amino-acid biosynthesis; glycine biosynthesis; glycine from L-serine: step 1/1. Its function is as follows. Catalyzes the reversible interconversion of serine and glycine with tetrahydrofolate (THF) serving as the one-carbon carrier. This reaction serves as the major source of one-carbon groups required for the biosynthesis of purines, thymidylate, methionine, and other important biomolecules. Also exhibits THF-independent aldolase activity toward beta-hydroxyamino acids, producing glycine and aldehydes, via a retro-aldol mechanism. This is Serine hydroxymethyltransferase from Psychrobacter cryohalolentis (strain ATCC BAA-1226 / DSM 17306 / VKM B-2378 / K5).